Here is a 382-residue protein sequence, read N- to C-terminus: Galactokinase (382 aa).

Position 34–37 (34–37 (EHTD)) interacts with substrate. 124 to 130 (GAGLSSS) serves as a coordination point for ATP. 2 residues coordinate Mg(2+): S130 and E162. D174 (proton acceptor) is an active-site residue. A substrate-binding site is contributed by Y223.

This sequence belongs to the GHMP kinase family. GalK subfamily.

The protein resides in the cytoplasm. It carries out the reaction alpha-D-galactose + ATP = alpha-D-galactose 1-phosphate + ADP + H(+). Its pathway is carbohydrate metabolism; galactose metabolism. Functionally, catalyzes the transfer of the gamma-phosphate of ATP to D-galactose to form alpha-D-galactose-1-phosphate (Gal-1-P). The polypeptide is Galactokinase (Salmonella newport (strain SL254)).